The sequence spans 184 residues: GTP cyclohydrolase 1 (184 aa).

Zn(2+) is bound by residues C75, H78, and C146.

The protein belongs to the GTP cyclohydrolase I family. In terms of assembly, homomer.

The enzyme catalyses GTP + H2O = 7,8-dihydroneopterin 3'-triphosphate + formate + H(+). It participates in cofactor biosynthesis; 7,8-dihydroneopterin triphosphate biosynthesis; 7,8-dihydroneopterin triphosphate from GTP: step 1/1. This Teredinibacter turnerae (strain ATCC 39867 / T7901) protein is GTP cyclohydrolase 1.